The chain runs to 21 residues: Large ribosomal subunit protein uL10 (21 aa).

The protein belongs to the universal ribosomal protein uL10 family. In terms of assembly, part of the ribosomal stalk of the 50S ribosomal subunit. The N-terminus interacts with L11 and the large rRNA to form the base of the stalk. The C-terminus forms an elongated spine to which L12 dimers bind in a sequential fashion forming a multimeric L10(L12)X complex.

Its function is as follows. Forms part of the ribosomal stalk, playing a central role in the interaction of the ribosome with GTP-bound translation factors. In Bacillus cereus, this protein is Large ribosomal subunit protein uL10 (rplJ).